A 322-amino-acid polypeptide reads, in one-letter code: Tyrosine recombinase XerC (322 aa).

The Core-binding (CB) domain occupies 14 to 104 (PDLREAAAAW…ALRSFARHLD (91 aa)). In terms of domain architecture, Tyr recombinase spans 125-311 (RLPRPLPVAA…DSARLLSAFD (187 aa)). Residues Arg-170, Lys-195, His-263, Arg-266, and His-289 contribute to the active site. The active-site O-(3'-phospho-DNA)-tyrosine intermediate is the Tyr-298.

This sequence belongs to the 'phage' integrase family. XerC subfamily. Forms a cyclic heterotetrameric complex composed of two molecules of XerC and two molecules of XerD.

It localises to the cytoplasm. In terms of biological role, site-specific tyrosine recombinase, which acts by catalyzing the cutting and rejoining of the recombining DNA molecules. The XerC-XerD complex is essential to convert dimers of the bacterial chromosome into monomers to permit their segregation at cell division. It also contributes to the segregational stability of plasmids. The polypeptide is Tyrosine recombinase XerC (Methylobacterium nodulans (strain LMG 21967 / CNCM I-2342 / ORS 2060)).